The chain runs to 324 residues: NADH-ubiquinone oxidoreductase chain 1 (324 aa).

The next 8 membrane-spanning stretches (helical) occupy residues 9 to 29 (LINP…LTLI), 75 to 95 (FLFL…WAPM), 106 to 126 (LGIL…LGSG), 146 to 166 (ISYE…SGGY), 177 to 197 (SIWL…STLA), 228 to 248 (LFFL…AVLF), 259 to 279 (ELTT…FLWV), and 299 to 319 (FLPL…ALAG).

This sequence belongs to the complex I subunit 1 family.

The protein resides in the mitochondrion inner membrane. The enzyme catalyses a ubiquinone + NADH + 5 H(+)(in) = a ubiquinol + NAD(+) + 4 H(+)(out). Its function is as follows. Core subunit of the mitochondrial membrane respiratory chain NADH dehydrogenase (Complex I) that is believed to belong to the minimal assembly required for catalysis. Complex I functions in the transfer of electrons from NADH to the respiratory chain. The immediate electron acceptor for the enzyme is believed to be ubiquinone. This is NADH-ubiquinone oxidoreductase chain 1 (MT-ND1) from Cyprinus carpio (Common carp).